Reading from the N-terminus, the 652-residue chain is Spermatogenesis-associated protein 13 (652 aa).

The tract at residues 1-24 (MTSASPEDQNAPVGCPKGARRRRP) is disordered. Serine 78 carries the post-translational modification Phosphoserine. The tract at residues 81 to 108 (IGLDRVGRRRQMRASNVSSDGGTEPSAL) is disordered. The tract at residues 98-150 (SSDGGTEPSALVDDNGSEEDFSYEDLCQASPRYLQPGGEQLAINELISDGNVV) is ABR (APC-binding region) domain. Serine 114 bears the Phosphoserine mark. Positions 147–206 (GNVVCAEALWDHVTMDDQELGFKAGDVIQVLEASNKDWWWGRSEDKEAWFPASFVRLRVN) constitute an SH3 domain. The disordered stretch occupies residues 209–235 (ELSENSSSTPSEEQDEEASQSRHRHCE). Positions 240–424 (MRTNVIREIM…KNVACLINER (185 aa)) constitute a DH domain. The PH domain maps to 455 to 561 (ELIHSGELTK…WLQACADERR (107 aa)). Positions 561-652 (RRVQEDKEMG…TFNRLTPFRK (92 aa)) are C-terminal tail.

In terms of assembly, interacts (via ABR and SH3 domain) with APC. The binding of APC enhances its GEF activity by relieving it from an autoinhibitory conformation, in which the ABR and SH3 domains are associated with the C-terminal tail. Interacts (via C-terminal tail) with PPP1R9B (via C-terminus). Interacts with RAC1. Expressed at high levels in the placenta, spleen and kidney, at moderate levels in lung, small intestine, liver, brain and heart, and at low levels in skeletal muscle. Expression is aberrantly enhanced in most colorectal tumors.

The protein resides in the cytoplasm. Its subcellular location is the cell projection. It localises to the filopodium. It is found in the lamellipodium. The protein localises to the ruffle membrane. The protein resides in the podosome. Its activity is regulated as follows. Both the ABR and the SH3 domains contribute to maintaining the protein in an inhibited conformation by associating with the C-terminal tail. Binding of these domains to the C-terminal tail inhibits the activity of the protein by blocking a region that is required for its GEF activity. Its function is as follows. Acts as a guanine nucleotide exchange factor (GEF) for RHOA, RAC1 and CDC42 GTPases. Regulates cell migration and adhesion assembly and disassembly through a RAC1, PI3K, RHOA and AKT1-dependent mechanism. Increases both RAC1 and CDC42 activity, but decreases the amount of active RHOA. Required for MMP9 up-regulation via the JNK signaling pathway in colorectal tumor cells. Involved in tumor angiogenesis and may play a role in intestinal adenoma formation and tumor progression. This Homo sapiens (Human) protein is Spermatogenesis-associated protein 13.